The sequence spans 558 residues: Serine palmitoyltransferase 1 (558 aa).

The Lumenal segment spans residues Met1–Ser49. The chain crosses the membrane as a helical span at residues His50 to Gln84. The Cytoplasmic segment spans residues Lys85 to Met341. The residue at position 121 (Thr121) is a Phosphothreonine. The helical transmembrane segment at Asp342–Met371 threads the bilayer. Residues Cys372–Phe424 are Lumenal-facing. The chain crosses the membrane as a helical span at residues Ala425–Lys457. Residues Phe458–Lys558 lie on the Cytoplasmic side of the membrane.

It belongs to the class-II pyridoxal-phosphate-dependent aminotransferase family. As to quaternary structure, LCB1 and LCB2 encode essential subunits of the enzyme and form a heterodimer. Component of the SPOTS complex, at least composed of LCB1/2 (LCB1 and/or LCB2), ORM1/2 (ORM1 and/or ORM2), SAC1 and TSC3. Interacts with LCB2 and TSC3. The cofactor is pyridoxal 5'-phosphate.

The protein resides in the cytoplasm. It localises to the endoplasmic reticulum membrane. The catalysed reaction is L-serine + hexadecanoyl-CoA + H(+) = 3-oxosphinganine + CO2 + CoA. The protein operates within lipid metabolism; sphingolipid metabolism. Component of serine palmitoyltransferase (SPT), which catalyzes the committed step in the synthesis of sphingolipids, the condensation of serine with palmitoyl CoA to form the long chain base 3-ketosphinganine. The protein is Serine palmitoyltransferase 1 (LCB1) of Saccharomyces cerevisiae (strain ATCC 204508 / S288c) (Baker's yeast).